We begin with the raw amino-acid sequence, 98 residues long: NADH-ubiquinone oxidoreductase chain 4L (98 aa).

2 helical membrane-spanning segments follow: residues 26–46 and 61–81; these read LVAS…MATL and IILL…LISI.

This sequence belongs to the complex I subunit 4L family. Core subunit of respiratory chain NADH dehydrogenase (Complex I) which is composed of 45 different subunits.

The protein localises to the mitochondrion inner membrane. The catalysed reaction is a ubiquinone + NADH + 5 H(+)(in) = a ubiquinol + NAD(+) + 4 H(+)(out). In terms of biological role, core subunit of the mitochondrial membrane respiratory chain NADH dehydrogenase (Complex I) which catalyzes electron transfer from NADH through the respiratory chain, using ubiquinone as an electron acceptor. Part of the enzyme membrane arm which is embedded in the lipid bilayer and involved in proton translocation. The protein is NADH-ubiquinone oxidoreductase chain 4L (MT-ND4L) of Macaca nigrescens (Gorontalo macaque).